Here is a 279-residue protein sequence, read N- to C-terminus: Thymidylate synthase (279 aa).

Position 141–142 (141–142 (RR)) interacts with dUMP. Cys-161 acts as the Nucleophile in catalysis. Residues 181–184 (RSND), Asn-192, and 222–224 (HVY) contribute to the dUMP site. Asp-184 contacts (6R)-5,10-methylene-5,6,7,8-tetrahydrofolate. Residue Ala-278 participates in (6R)-5,10-methylene-5,6,7,8-tetrahydrofolate binding.

The protein belongs to the thymidylate synthase family. Bacterial-type ThyA subfamily. In terms of assembly, homodimer.

The protein resides in the cytoplasm. It catalyses the reaction dUMP + (6R)-5,10-methylene-5,6,7,8-tetrahydrofolate = 7,8-dihydrofolate + dTMP. Its pathway is pyrimidine metabolism; dTTP biosynthesis. Functionally, catalyzes the reductive methylation of 2'-deoxyuridine-5'-monophosphate (dUMP) to 2'-deoxythymidine-5'-monophosphate (dTMP) while utilizing 5,10-methylenetetrahydrofolate (mTHF) as the methyl donor and reductant in the reaction, yielding dihydrofolate (DHF) as a by-product. This enzymatic reaction provides an intracellular de novo source of dTMP, an essential precursor for DNA biosynthesis. The polypeptide is Thymidylate synthase (Bacillus mojavensis).